A 139-amino-acid chain; its full sequence is Nucleoside diphosphate kinase (139 aa).

Residues lysine 9, phenylalanine 57, arginine 85, threonine 91, arginine 102, and asparagine 112 each contribute to the ATP site. Histidine 115 (pros-phosphohistidine intermediate) is an active-site residue.

This sequence belongs to the NDK family. Homotetramer. The cofactor is Mg(2+).

Its subcellular location is the cytoplasm. It catalyses the reaction a 2'-deoxyribonucleoside 5'-diphosphate + ATP = a 2'-deoxyribonucleoside 5'-triphosphate + ADP. The enzyme catalyses a ribonucleoside 5'-diphosphate + ATP = a ribonucleoside 5'-triphosphate + ADP. Its function is as follows. Major role in the synthesis of nucleoside triphosphates other than ATP. The ATP gamma phosphate is transferred to the NDP beta phosphate via a ping-pong mechanism, using a phosphorylated active-site intermediate. The sequence is that of Nucleoside diphosphate kinase from Desulfosudis oleivorans (strain DSM 6200 / JCM 39069 / Hxd3) (Desulfococcus oleovorans).